The sequence spans 329 residues: Ketol-acid reductoisomerase (NADP(+)) (329 aa).

The 181-residue stretch at 2–182 (TQLFYDTDAD…GGTRAGILET (181 aa)) folds into the KARI N-terminal Rossmann domain. Residues 25-28 (YGSQ), Ser51, Ser53, and 83-86 (DEFQ) each bind NADP(+). The active site involves His108. Gly134 is an NADP(+) binding site. One can recognise a KARI C-terminal knotted domain in the interval 183–328 (NFKEETETDL…KGLRAMFSWL (146 aa)). The Mg(2+) site is built by Asp191, Glu195, Glu227, and Glu231. A substrate-binding site is contributed by Ser252.

It belongs to the ketol-acid reductoisomerase family. It depends on Mg(2+) as a cofactor.

The catalysed reaction is (2R)-2,3-dihydroxy-3-methylbutanoate + NADP(+) = (2S)-2-acetolactate + NADPH + H(+). It catalyses the reaction (2R,3R)-2,3-dihydroxy-3-methylpentanoate + NADP(+) = (S)-2-ethyl-2-hydroxy-3-oxobutanoate + NADPH + H(+). It participates in amino-acid biosynthesis; L-isoleucine biosynthesis; L-isoleucine from 2-oxobutanoate: step 2/4. Its pathway is amino-acid biosynthesis; L-valine biosynthesis; L-valine from pyruvate: step 2/4. In terms of biological role, involved in the biosynthesis of branched-chain amino acids (BCAA). Catalyzes an alkyl-migration followed by a ketol-acid reduction of (S)-2-acetolactate (S2AL) to yield (R)-2,3-dihydroxy-isovalerate. In the isomerase reaction, S2AL is rearranged via a Mg-dependent methyl migration to produce 3-hydroxy-3-methyl-2-ketobutyrate (HMKB). In the reductase reaction, this 2-ketoacid undergoes a metal-dependent reduction by NADPH to yield (R)-2,3-dihydroxy-isovalerate. This is Ketol-acid reductoisomerase (NADP(+)) from Prochlorococcus marinus subsp. pastoris (strain CCMP1986 / NIES-2087 / MED4).